Here is a 620-residue protein sequence, read N- to C-terminus: Endoglucanase 6 (620 aa).

Positions 1 to 22 (MEKFAPVAALLLLLLCFPVAFS) are cleaved as a signal peptide. Catalysis depends on aspartate 78, which acts as the Nucleophile. Active-site residues include histidine 411, aspartate 463, and glutamate 472. Asparagine 554 and asparagine 564 each carry an N-linked (GlcNAc...) asparagine glycan.

The protein belongs to the glycosyl hydrolase 9 (cellulase E) family.

It localises to the secreted. It carries out the reaction Endohydrolysis of (1-&gt;4)-beta-D-glucosidic linkages in cellulose, lichenin and cereal beta-D-glucans.. This is Endoglucanase 6 from Arabidopsis thaliana (Mouse-ear cress).